A 169-amino-acid chain; its full sequence is Peptide methionine sulfoxide reductase MsrA (169 aa).

Cys-10 is an active-site residue.

It belongs to the MsrA Met sulfoxide reductase family.

The enzyme catalyses L-methionyl-[protein] + [thioredoxin]-disulfide + H2O = L-methionyl-(S)-S-oxide-[protein] + [thioredoxin]-dithiol. It catalyses the reaction [thioredoxin]-disulfide + L-methionine + H2O = L-methionine (S)-S-oxide + [thioredoxin]-dithiol. Functionally, has an important function as a repair enzyme for proteins that have been inactivated by oxidation. Catalyzes the reversible oxidation-reduction of methionine sulfoxide in proteins to methionine. The polypeptide is Peptide methionine sulfoxide reductase MsrA (Streptococcus agalactiae serotype Ia (strain ATCC 27591 / A909 / CDC SS700)).